Reading from the N-terminus, the 358-residue chain is Peroxidase 54 (358 aa).

Positions 1-31 (MAVTSSSSTCDGFFIISLIVIVSSLFGTSSA) are cleaved as a signal peptide. Gln32 bears the Pyrrolidone carboxylic acid mark. N-linked (GlcNAc...) asparagine glycosylation is found at Asn34 and Asn44. Intrachain disulfides connect Cys42–Cys122, Cys75–Cys80, Cys128–Cys330, and Cys207–Cys239. The Proton acceptor role is filled by His73. Positions 74, 77, 79, 81, and 83 each coordinate Ca(2+). Residues Asn103, Asn161, and Asn166 are each glycosylated (N-linked (GlcNAc...) asparagine). Pro170 lines the substrate pocket. The N-linked (GlcNAc...) asparagine glycan is linked to Asn178. His200 is a binding site for heme b. Thr201 serves as a coordination point for Ca(2+). 3 N-linked (GlcNAc...) asparagine glycosylation sites follow: Asn218, Asn228, and Asn242. 3 residues coordinate Ca(2+): Asp252, Thr255, and Asp260. Asn298 is a glycosylation site (N-linked (GlcNAc...) asparagine).

The protein belongs to the peroxidase family. Classical plant (class III) peroxidase subfamily. Heme b is required as a cofactor. Requires Ca(2+) as cofactor.

The protein resides in the secreted. Its subcellular location is the vacuole. The catalysed reaction is 2 a phenolic donor + H2O2 = 2 a phenolic radical donor + 2 H2O. Removal of H(2)O(2), oxidation of toxic reductants, biosynthesis and degradation of lignin, suberization, auxin catabolism, response to environmental stresses such as wounding, pathogen attack and oxidative stress. These functions might be dependent on each isozyme/isoform in each plant tissue. In Arabidopsis thaliana (Mouse-ear cress), this protein is Peroxidase 54 (PER54).